A 186-amino-acid chain; its full sequence is Large ribosomal subunit protein uL22 (186 aa).

Residues 161–186 (VDDEPAKKKLSKKKLQRQKEKMLRSE) form a disordered region. The span at 177–186 (RQKEKMLRSE) shows a compositional bias: basic and acidic residues.

Belongs to the universal ribosomal protein uL22 family.

The polypeptide is Large ribosomal subunit protein uL22 (RpL17) (Drosophila pseudoobscura pseudoobscura (Fruit fly)).